Reading from the N-terminus, the 367-residue chain is Glutamate 5-kinase (367 aa).

K8 contacts ATP. Substrate contacts are provided by S49, D136, and N148. ATP contacts are provided by residues 168–169 and 210–216; these read TD and TGGMVTK. Residues 275 to 353 form the PUA domain; sequence AGKLYLDEGA…REISTILGYA (79 aa).

Belongs to the glutamate 5-kinase family.

It localises to the cytoplasm. It catalyses the reaction L-glutamate + ATP = L-glutamyl 5-phosphate + ADP. Its pathway is amino-acid biosynthesis; L-proline biosynthesis; L-glutamate 5-semialdehyde from L-glutamate: step 1/2. In terms of biological role, catalyzes the transfer of a phosphate group to glutamate to form L-glutamate 5-phosphate. The sequence is that of Glutamate 5-kinase from Nostoc punctiforme (strain ATCC 29133 / PCC 73102).